The chain runs to 471 residues: MVNTATNTGFITQIIGPVIDIEFPNGKLPPIYNSVIVSDVTCEVQQLLGNNRVRAVSMTSTDGLKRGMEVTDLNAPISVPVGKSTLGRIFNVLGVPVDEMGEVSMETTLPIHRLSPRFTELETKPSIFETGIKVVDLLAPYRRGGKIGLFGGAGVGKTVLIMELINNIAKAHGGVSVFGGVGERTREGNDLYMEMKESGVINASNLSESKVALVYGQMNEPPGARMRVGLTALTMAEYFRDVNKQDVLLFIDNIFRFVQAGSEVSALLGRMPSAVGYQPTLATEMGTLQERITSTREGSITSIQAVYVPADDLTDPAPATTFSHLDATTVLSRNLAAKGIYPAVDPLDSTSTMLQINIVGSEHYDTAQDVKETLQRYKELQDIIAILGLDELSEEDRLTVARARKVERFLSQPFFVAEVFTGSPGKYVSLADTIKGFNMILNGELDELPEQAFYLVGNIDEAIEKANSLKG.

ATP is bound at residue 151–158; sequence GGAGVGKT.

The protein belongs to the ATPase alpha/beta chains family. As to quaternary structure, F-type ATPases have 2 components, CF(1) - the catalytic core - and CF(0) - the membrane proton channel. CF(1) has five subunits: alpha(3), beta(3), gamma(1), delta(1), epsilon(1). CF(0) has four main subunits: a(1), b(1), b'(1) and c(9-12).

It localises to the plastid. It is found in the chloroplast thylakoid membrane. It carries out the reaction ATP + H2O + 4 H(+)(in) = ADP + phosphate + 5 H(+)(out). Its function is as follows. Produces ATP from ADP in the presence of a proton gradient across the membrane. The catalytic sites are hosted primarily by the beta subunits. The protein is ATP synthase subunit beta, chloroplastic of Rhodomonas salina (Cryptomonas salina).